A 112-amino-acid polypeptide reads, in one-letter code: Ciliary microtubule inner protein 3 (112 aa).

The segment at 1–34 is disordered; that stretch reads MCKDSQKPSVPSHGPKTPSCKGVKAPHSSRPRAW.

This sequence belongs to the CIMIP3-like family.

The protein localises to the cytoplasm. It localises to the cytoskeleton. The protein resides in the flagellum axoneme. This Homo sapiens (Human) protein is Ciliary microtubule inner protein 3.